Consider the following 326-residue polypeptide: GTP 3',8-cyclase (326 aa).

The 226-residue stretch at 7 to 232 (GFGRSFPYLR…PRAADAGPAR (226 aa)) folds into the Radical SAM core domain. R16 contacts GTP. The [4Fe-4S] cluster site is built by C23 and C27. Y29 is an S-adenosyl-L-methionine binding site. [4Fe-4S] cluster is bound at residue C30. Residue R65 participates in GTP binding. An S-adenosyl-L-methionine-binding site is contributed by G69. T96 contacts GTP. Position 120 (S120) interacts with S-adenosyl-L-methionine. K157 contacts GTP. M191 lines the S-adenosyl-L-methionine pocket. 2 residues coordinate [4Fe-4S] cluster: C254 and C257. 259–261 (RLR) serves as a coordination point for GTP. C271 provides a ligand contact to [4Fe-4S] cluster.

It belongs to the radical SAM superfamily. MoaA family. In terms of assembly, monomer and homodimer. The cofactor is [4Fe-4S] cluster.

The catalysed reaction is GTP + AH2 + S-adenosyl-L-methionine = (8S)-3',8-cyclo-7,8-dihydroguanosine 5'-triphosphate + 5'-deoxyadenosine + L-methionine + A + H(+). It functions in the pathway cofactor biosynthesis; molybdopterin biosynthesis. Functionally, catalyzes the cyclization of GTP to (8S)-3',8-cyclo-7,8-dihydroguanosine 5'-triphosphate. This Stenotrophomonas maltophilia (strain K279a) protein is GTP 3',8-cyclase.